A 319-amino-acid chain; its full sequence is ATP-dependent 6-phosphofructokinase (319 aa).

ATP is bound at residue glycine 11. 21–25 (RAVVR) serves as a coordination point for ADP. ATP is bound by residues 72–73 (RC) and 102–105 (GDGS). Mg(2+) is bound at residue aspartate 103. Substrate is bound at residue 125 to 127 (TID). Aspartate 127 functions as the Proton acceptor in the catalytic mechanism. Residue arginine 154 participates in ADP binding. Residues arginine 162 and 169–171 (MGR) each bind substrate. Residues 185–187 (GAE), arginine 211, and 213–215 (KKH) each bind ADP. Residues glutamate 222, arginine 243, and 249–252 (HIQR) contribute to the substrate site.

It belongs to the phosphofructokinase type A (PFKA) family. ATP-dependent PFK group I subfamily. Prokaryotic clade 'B1' sub-subfamily. In terms of assembly, homotetramer. Mg(2+) serves as cofactor.

The protein resides in the cytoplasm. The enzyme catalyses beta-D-fructose 6-phosphate + ATP = beta-D-fructose 1,6-bisphosphate + ADP + H(+). It participates in carbohydrate degradation; glycolysis; D-glyceraldehyde 3-phosphate and glycerone phosphate from D-glucose: step 3/4. With respect to regulation, allosterically activated by ADP and other diphosphonucleosides, and allosterically inhibited by phosphoenolpyruvate. Its function is as follows. Catalyzes the phosphorylation of D-fructose 6-phosphate to fructose 1,6-bisphosphate by ATP, the first committing step of glycolysis. The polypeptide is ATP-dependent 6-phosphofructokinase (Bacillus velezensis (strain DSM 23117 / BGSC 10A6 / LMG 26770 / FZB42) (Bacillus amyloliquefaciens subsp. plantarum)).